We begin with the raw amino-acid sequence, 423 residues long: Amino sugar nitrososynthase RubN8 (423 aa).

This sequence belongs to the acyl-CoA dehydrogenase family. The cofactor is FAD.

The protein operates within antibiotic biosynthesis. Its function is as follows. Nitrososynthase involved in the biosynthesis of rubradirin, an ansamycin antibiotic. In vitro, catalyzes the double-oxidation of TDP-L-epi-vancosamine to TDP-L-epi-vancosonitrose. In vivo, probably catalyzes the formation of D-rubranitrose, the nitro sugar moiety of rubradirin. This chain is Amino sugar nitrososynthase RubN8, found in Streptomyces rubradiris (Streptomyces achromogenes subsp. rubradiris).